A 389-amino-acid chain; its full sequence is tRNA(Met) cytidine acetate ligase (389 aa).

Residues 8-21 (IAEFNPFHKGHEYL), glycine 97, asparagine 153, and arginine 176 each bind ATP.

This sequence belongs to the TmcAL family.

Its subcellular location is the cytoplasm. The catalysed reaction is cytidine(34) in elongator tRNA(Met) + acetate + ATP = N(4)-acetylcytidine(34) in elongator tRNA(Met) + AMP + diphosphate. Functionally, catalyzes the formation of N(4)-acetylcytidine (ac(4)C) at the wobble position of elongator tRNA(Met), using acetate and ATP as substrates. First activates an acetate ion to form acetyladenylate (Ac-AMP) and then transfers the acetyl group to tRNA to form ac(4)C34. The sequence is that of tRNA(Met) cytidine acetate ligase from Lactococcus lactis subsp. lactis (strain IL1403) (Streptococcus lactis).